The primary structure comprises 453 residues: UDP-N-acetylmuramoylalanine--D-glutamate ligase (453 aa).

115 to 121 is an ATP binding site; that stretch reads GSNGKTT.

It belongs to the MurCDEF family.

It is found in the cytoplasm. The enzyme catalyses UDP-N-acetyl-alpha-D-muramoyl-L-alanine + D-glutamate + ATP = UDP-N-acetyl-alpha-D-muramoyl-L-alanyl-D-glutamate + ADP + phosphate + H(+). It participates in cell wall biogenesis; peptidoglycan biosynthesis. Cell wall formation. Catalyzes the addition of glutamate to the nucleotide precursor UDP-N-acetylmuramoyl-L-alanine (UMA). The protein is UDP-N-acetylmuramoylalanine--D-glutamate ligase of Koribacter versatilis (strain Ellin345).